The following is a 137-amino-acid chain: Large ribosomal subunit protein uL16 (137 aa).

Belongs to the universal ribosomal protein uL16 family. In terms of assembly, part of the 50S ribosomal subunit.

Its function is as follows. Binds 23S rRNA and is also seen to make contacts with the A and possibly P site tRNAs. The polypeptide is Large ribosomal subunit protein uL16 (Lactococcus lactis subsp. lactis (strain IL1403) (Streptococcus lactis)).